A 147-amino-acid chain; its full sequence is uncharacterized protein (147 aa).

The segment at 30-102 is disordered; the sequence is GRCEQVALSS…TPPTRPESIF (73 aa). The segment covering 62 to 71 has biased composition (polar residues); it reads RPSTGETFVQ.

This is an uncharacterized protein from Homo sapiens (Human).